The following is a 460-amino-acid chain: NADH-ubiquinone oxidoreductase chain 4 (460 aa).

13 consecutive transmembrane segments (helical) span residues 22 to 42, 59 to 79, 93 to 113, 114 to 134, 148 to 168, 195 to 215, 225 to 245, 258 to 278, 286 to 306, 310 to 330, 351 to 371, 394 to 414, and 440 to 460; these read WLWPITTTHSLLIALLSLLWF, IDPLSAPLLILTCWLLPLMIL, QRIYITLLISLQTFLIMAFSA, TELIMFYIMFEATLIPTLIII, TYFLFYTLIGSLPLLVALLLM, FWWTACLIAFLVKMPLYGVHL, PIAGSMILAAVLLKLGGYGMM, MAYPFLILAIWGVIMTSSICL, LIAYSSVSHMGLVAGAIMIQT, FAGAITLMIAHGLVSSALFCL, VMLPLMATWWFIANLANLALP, ILLTGLGVLITASYSLYMFLM, and LHLIPMLLLILKPELIWGWTF.

This sequence belongs to the complex I subunit 4 family.

The protein resides in the mitochondrion membrane. It carries out the reaction a ubiquinone + NADH + 5 H(+)(in) = a ubiquinol + NAD(+) + 4 H(+)(out). Functionally, core subunit of the mitochondrial membrane respiratory chain NADH dehydrogenase (Complex I) that is believed to belong to the minimal assembly required for catalysis. Complex I functions in the transfer of electrons from NADH to the respiratory chain. The immediate electron acceptor for the enzyme is believed to be ubiquinone. The sequence is that of NADH-ubiquinone oxidoreductase chain 4 (MT-ND4) from Squalus acanthias (Spiny dogfish).